The primary structure comprises 2265 residues: Collagen alpha-6(VI) chain (2265 aa).

Positions M1 to Q18 are cleaved as a signal peptide. Residues D19–T1390 are nonhelical region. VWFA domains follow at residues D26–V205, D228–L406, D435–V605, D621–L790, D808–V981, D999–I1170, and D1186–A1378. Residues N197, N238, and N346 are each glycosylated (N-linked (GlcNAc...) asparagine). N-linked (GlcNAc...) asparagine glycosylation occurs at N760. The interval G1391–G1724 is triple-helical region. A disordered region spans residues D1398–A1722. Residues E1455–E1470 are compositionally biased toward acidic residues. Residues A1497 to R1507 are compositionally biased toward basic and acidic residues. The Cell attachment site motif lies at R1507–D1509. Basic residues predominate over residues S1546–H1558. Positions L1725–A2265 are nonhelical region. VWFA domains are found at residues E1756–Q1936 and D1964–I2165. A disordered region spans residues S2186 to K2205.

It belongs to the type VI collagen family. As to quaternary structure, trimers composed of three different chains: alpha-1(VI), alpha-2(VI), and alpha-3(VI) or alpha-4(VI) or alpha-5(VI) or alpha-6(VI). Post-translationally, prolines at the third position of the tripeptide repeating unit (G-X-Y) are hydroxylated in some or all of the chains. As to expression, in newborn, it is expressed in lung, heart, kidney, muscle, brain, intestine, skin, femur and sternum. In adult, it is expressed in lung, heart, muscle, ovary, brain, liver and sternum.

The protein localises to the secreted. It is found in the extracellular space. The protein resides in the extracellular matrix. In terms of biological role, collagen VI acts as a cell-binding protein. The chain is Collagen alpha-6(VI) chain (Col6a6) from Mus musculus (Mouse).